We begin with the raw amino-acid sequence, 346 residues long: Methylthioribose-1-phosphate isomerase (346 aa).

Substrate is bound by residues 46-48, Arg-89, and Gln-196; that span reads RGA. Asp-237 acts as the Proton donor in catalysis. 247 to 248 provides a ligand contact to substrate; it reads NK.

This sequence belongs to the eIF-2B alpha/beta/delta subunits family. MtnA subfamily.

It carries out the reaction 5-(methylsulfanyl)-alpha-D-ribose 1-phosphate = 5-(methylsulfanyl)-D-ribulose 1-phosphate. Its pathway is amino-acid biosynthesis; L-methionine biosynthesis via salvage pathway; L-methionine from S-methyl-5-thio-alpha-D-ribose 1-phosphate: step 1/6. Its function is as follows. Catalyzes the interconversion of methylthioribose-1-phosphate (MTR-1-P) into methylthioribulose-1-phosphate (MTRu-1-P). The protein is Methylthioribose-1-phosphate isomerase of Trichlorobacter lovleyi (strain ATCC BAA-1151 / DSM 17278 / SZ) (Geobacter lovleyi).